Reading from the N-terminus, the 59-residue chain is Salivary thrombin inhibitor XC-43 (59 aa).

The N-terminal stretch at 1–23 (MNLQFLFIFIAFCVMLFAQIVTA) is a signal peptide.

In terms of assembly, interacts with human F2 (thrombin). Salivary gland (at protein level).

Its subcellular location is the secreted. Functionally, anticoagulant protein that acts as a competitive inhibitor of host thrombin. Inhibits thrombin-mediated host platelet aggregation. The chain is Salivary thrombin inhibitor XC-43 from Xenopsylla cheopis (Oriental rat flea).